Here is a 165-residue protein sequence, read N- to C-terminus: Regulatory protein RecX (165 aa).

It belongs to the RecX family.

It localises to the cytoplasm. In terms of biological role, modulates RecA activity. This chain is Regulatory protein RecX, found in Cronobacter sakazakii (strain ATCC BAA-894) (Enterobacter sakazakii).